The following is a 479-amino-acid chain: Ribosomal lysine N-methyltransferase 2 (479 aa).

The SET domain maps to 22-325 (PNISICESPE…INEELFLNYG (304 aa)). Position 324 (Tyr-324) interacts with S-adenosyl-L-methionine.

It belongs to the class V-like SAM-binding methyltransferase superfamily. RKM2 family.

Functionally, S-adenosyl-L-methionine-dependent protein-lysine N-methyltransferase that trimethylates 60S ribosomal protein L12 (RPL12A and RPL12B) at 'Lys-4' and 'Lys-11'. The polypeptide is Ribosomal lysine N-methyltransferase 2 (Saccharomyces cerevisiae (strain ATCC 204508 / S288c) (Baker's yeast)).